Reading from the N-terminus, the 352-residue chain is Chorismate synthase (352 aa).

Residue arginine 48 participates in NADP(+) binding. FMN-binding positions include 125–127 (RSS), 237–238 (NA), glycine 278, 293–297 (KPTSS), and arginine 319.

The protein belongs to the chorismate synthase family. As to quaternary structure, homotetramer. It depends on FMNH2 as a cofactor.

The enzyme catalyses 5-O-(1-carboxyvinyl)-3-phosphoshikimate = chorismate + phosphate. It participates in metabolic intermediate biosynthesis; chorismate biosynthesis; chorismate from D-erythrose 4-phosphate and phosphoenolpyruvate: step 7/7. Its function is as follows. Catalyzes the anti-1,4-elimination of the C-3 phosphate and the C-6 proR hydrogen from 5-enolpyruvylshikimate-3-phosphate (EPSP) to yield chorismate, which is the branch point compound that serves as the starting substrate for the three terminal pathways of aromatic amino acid biosynthesis. This reaction introduces a second double bond into the aromatic ring system. In Francisella tularensis subsp. mediasiatica (strain FSC147), this protein is Chorismate synthase.